Here is a 38-residue protein sequence, read N- to C-terminus: Trypsin inhibitor DE5 beta chain (38 aa).

The protein belongs to the protease inhibitor I3 (leguminous Kunitz-type inhibitor) family. As to quaternary structure, heterodimer of an alpha and a beta chain linked by a disulfide bond.

Functionally, inhibition of trypsin. The sequence is that of Trypsin inhibitor DE5 beta chain from Adenanthera pavonina (Sandal bead tree).